Reading from the N-terminus, the 197-residue chain is Probable GTP-binding protein EngB (197 aa).

Positions Ser25–Arg197 constitute an EngB-type G domain. GTP is bound by residues Gly33 to Ser40, Gly60 to Gln64, Asp79 to Gly82, Thr146 to Asp149, and Ile177 to Ile179. Mg(2+) contacts are provided by Ser40 and Thr62.

This sequence belongs to the TRAFAC class TrmE-Era-EngA-EngB-Septin-like GTPase superfamily. EngB GTPase family. It depends on Mg(2+) as a cofactor.

Necessary for normal cell division and for the maintenance of normal septation. This chain is Probable GTP-binding protein EngB, found in Wolbachia pipientis subsp. Culex pipiens (strain wPip).